A 63-amino-acid chain; its full sequence is Progonadoliberin-1 (63 aa).

Pyrrolidone carboxylic acid is present on Gln1. Glycine amide is present on Gly10.

It belongs to the GnRH family. In terms of processing, the precursor is cleaved by ACE, which removes the Gly-Lys-Arg peptide at the C-terminus, leading to mature hormone. The mature form of Gonadoliberin-1 is also cleaved and degraded by ACE.

The protein resides in the secreted. In terms of biological role, stimulates the secretion of gonadotropins; it stimulates the secretion of both luteinizing and follicle-stimulating hormones. The chain is Progonadoliberin-1 (GNRH1) from Mesocricetus auratus (Golden hamster).